The sequence spans 1110 residues: ATP-dependent DNA helicase MPH1 (1110 aa).

A compositionally biased stretch (polar residues) spans 24 to 34; it reads LNEVSDSQTGR. Disordered stretches follow at residues 24-165, 178-212, and 236-305; these read LNEV…TNGK, FEEE…PVTN, and TETA…PTHH. Basic and acidic residues-rich tracts occupy residues 42–57 and 178–188; these read NSHE…REIE and FEEEQSARGDA. A compositionally biased stretch (acidic residues) spans 189 to 199; it reads EMLDDSIEEPG. 2 stretches are compositionally biased toward polar residues: residues 246-273 and 287-300; these read ISSQ…QTTL and QPAT…SRNE. Positions 331 to 499 constitute a Helicase ATP-binding domain; sequence IAHRALFHNL…EVIDGLSISR (169 aa). 344 to 351 provides a ligand contact to ATP; the sequence is LPTGLGKT. The DEAH box motif lies at 447–450; that stretch reads DEAH. Residues 675-846 form the Helicase C-terminal domain; it reads ILNHFLDAGG…RFTFHTDKSS (172 aa). Disordered regions lie at residues 867-937, 1013-1055, and 1069-1110; these read ENSQ…PDLG, VGDP…RCGT, and NLAW…DVFE. A compositionally biased stretch (basic residues) spans 879-890; sequence RSRAPKRPPKKF. Composition is skewed to basic and acidic residues over residues 891–900, 1041–1055, and 1077–1093; these read HMPDGVEKGF, QSRE…RCGT, and EAPR…DQKP.

This sequence belongs to the DEAD box helicase family. DEAH subfamily. FANCM sub-subfamily. Interacts with the MHF histone-fold complex to form the FANCM-MHF complex.

Its subcellular location is the nucleus. It carries out the reaction ATP + H2O = ADP + phosphate + H(+). Functionally, ATP-dependent DNA helicase involved in DNA damage repair by homologous recombination and in genome maintenance. Capable of unwinding D-loops. Plays a role in limiting crossover recombinants during mitotic DNA double-strand break (DSB) repair. Component of a FANCM-MHF complex which promotes gene conversion at blocked replication forks, probably by reversal of the stalled fork. This Coccidioides immitis (strain RS) (Valley fever fungus) protein is ATP-dependent DNA helicase MPH1.